The sequence spans 184 residues: Peptide methionine sulfoxide reductase (184 aa).

S58 carries the post-translational modification Phosphoserine.

The protein belongs to the MsrA Met sulfoxide reductase family.

The enzyme catalyses L-methionyl-[protein] + [thioredoxin]-disulfide + H2O = L-methionyl-(S)-S-oxide-[protein] + [thioredoxin]-dithiol. It catalyses the reaction [thioredoxin]-disulfide + L-methionine + H2O = L-methionine (S)-S-oxide + [thioredoxin]-dithiol. In terms of biological role, has an important function as a repair enzyme for proteins that have been inactivated by oxidation. Catalyzes the reversible oxidation-reduction of methionine sulfoxide in proteins to methionine. Also able to reduce dimethyl sulfoxide (DMSO) as well, with DMS as the product. The protein is Peptide methionine sulfoxide reductase (MXR1) of Saccharomyces cerevisiae (strain ATCC 204508 / S288c) (Baker's yeast).